The chain runs to 617 residues: Zinc finger protein 221 (617 aa).

In terms of domain architecture, KRAB spans V30 to S100. 3 consecutive C2H2-type zinc fingers follow at residues Y170–H192, H198–H220, and Y226–H248. The C2H2-type 4; degenerate zinc finger occupies F254 to H276. 11 C2H2-type zinc fingers span residues Y282 to H304, F310 to H332, F338 to H360, Y366 to H388, Y394 to H416, F422 to H444, Y450 to H472, Y478 to H500, F506 to H528, Y534 to H556, and Y562 to H584.

Belongs to the krueppel C2H2-type zinc-finger protein family.

The protein localises to the nucleus. Its function is as follows. May be involved in transcriptional regulation. The chain is Zinc finger protein 221 (ZNF221) from Homo sapiens (Human).